A 453-amino-acid chain; its full sequence is MTIHPQNHDLPTGSAMKATPFEALDLVFHFEDQAQRQWWKQAGPVLGQHLLLANYDINKQYQYLCFFGHHIIPILGPGPGSGYDYHPLEISQNFQRSGSTIRLGFQPRAYSSCVSPQDPFGELSTEEAMARLGQVTGVELDLQPYHLLASHLNLTKKEEKEMLQPTCYNSLSPSFKTQGLLAVELPRTGSITLKGYWFLSAKSMVTKTPISELSFQAFRNIDHGKDLLVPALRPIEEYFAEMKMKPANPTTPQTTEFATVACDHVDMSRTRFKLYLYECLWKYDRLADIYTLGGRLKNAPGIAEGLELLREIWSILQIPEGYHFASLQNSLLRKSTNAESCGEASKPASEEREFFDDQALIFNFEIRPGEKWPQPKVYFPLAYLTDSKAADAVVALFEKLGWKEEARRYKDNLKTYYPRCDLDKTSGLQHVLSFSYRPKTGPYTTVYYWKIGA.

A substrate-binding site is contributed by Glu-89. Arg-102, Lys-194, Tyr-196, Lys-273, Tyr-275, Tyr-378, Tyr-443, and Tyr-447 together coordinate dimethylallyl diphosphate.

Belongs to the tryptophan dimethylallyltransferase family.

The catalysed reaction is verruculogen + dimethylallyl diphosphate = fumitremorgin A + diphosphate. It functions in the pathway mycotoxin biosynthesis. Its function is as follows. Verruculogen prenyltransferase; part of the gene cluster that mediates the biosynthesis of fumitremorgins, indole alkaloids that carry not only intriguing chemical structures, but also interesting biological and pharmacological activities. The biosynthesis of fumitremorgin-type alkaloids begins by condensation of the two amino acids L-tryptophan and L-proline to brevianamide F, catalyzed by the non-ribosomal peptide synthetase ftmPS/ftmA. Brevianamide F is then prenylated by the prenyltransferase ftmPT1/ftmB in the presence of dimethylallyl diphosphate, resulting in the formation of tryprostatin B. The three cytochrome P450 monooxygenases, ftmP450-1/ftmC, ftmP450-2/ftmE and ftmP450-3/FtmG, are responsible for the conversion of tryprostatin B to 6-hydroxytryprostatin B, tryprostatin A to fumitremorgin C and fumitremorgin C to 12,13-dihydroxyfumitremorgin C, respectively. The putative methyltransferase ftmMT/ftmD is expected for the conversion of 6-hydroxytryprostatin B to tryprostatin A. FtmPT2/FtmH catalyzes the prenylation of 12,13-dihydroxyfumitre-morgin C in the presence of dimethylallyl diphosphate, resulting in the formation of fumitremorgin B. Fumitremorgin B is further converted to verruculogen by ftmOx1/ftmF via the insertion of an endoperoxide bond between the two prenyl moieties. Finally, verruculogen is further converted to fumitremorgin A by the verruculogen prenyltransferase ftmPT3. This Neosartorya fischeri (strain ATCC 1020 / DSM 3700 / CBS 544.65 / FGSC A1164 / JCM 1740 / NRRL 181 / WB 181) (Aspergillus fischerianus) protein is Verruculogen prenyltransferase.